A 58-amino-acid polypeptide reads, in one-letter code: Conotoxin Im5.4 (58 aa).

Residues 1-18 (MRCLPVVVFLLLLLSAAA) form the signal peptide. A propeptide spanning residues 19-28 (APGVGSKTER) is cleaved from the precursor.

The protein belongs to the conotoxin T superfamily. Post-translationally, contains 2 disulfide bonds that can be either 'C1-C3, C2-C4' or 'C1-C4, C2-C3', since these disulfide connectivities have been observed for conotoxins with cysteine framework V (for examples, see AC P0DQQ7 and AC P81755). Expressed by the venom duct.

It is found in the secreted. Its function is as follows. Probable neurotoxin. In Conus imperialis (Imperial cone), this protein is Conotoxin Im5.4.